Consider the following 230-residue polypeptide: UPF0173 metal-dependent hydrolase RHOS4_08540 (230 aa).

The protein belongs to the UPF0173 family.

This Cereibacter sphaeroides (strain ATCC 17023 / DSM 158 / JCM 6121 / CCUG 31486 / LMG 2827 / NBRC 12203 / NCIMB 8253 / ATH 2.4.1.) (Rhodobacter sphaeroides) protein is UPF0173 metal-dependent hydrolase RHOS4_08540.